The chain runs to 109 residues: Nucleoid-associated protein HD_0326 (109 aa).

The protein belongs to the YbaB/EbfC family. Homodimer.

It localises to the cytoplasm. Its subcellular location is the nucleoid. Its function is as follows. Binds to DNA and alters its conformation. May be involved in regulation of gene expression, nucleoid organization and DNA protection. The polypeptide is Nucleoid-associated protein HD_0326 (Haemophilus ducreyi (strain 35000HP / ATCC 700724)).